The primary structure comprises 757 residues: MDVNPTLLFLKVPAQNAISTTFPYTGDPPYSHGTGTGYTMDTVNRTHQYSEKGKWTTNTETGAPQLNPIDGPLPEDNEPSGYAQTDCVLEAMAFLEESHPGIFENSCLETMEVVQQTRVDRLTQGRQTYDWTLNRNQPAATALANTIEVFRSNGLTANESGRLIDFLKDVMESMDKEEMEITTHFQRKRRVRDNMTKKMVTQRTIGKKKQRVNKRSYLIRALTLNTMTKDAERGKLKRRAIATPGMQIRGFVYFVETLARSICEKLEQSGLPVGGNEKKAKLANVVRKMMTNSQDTELSFTITGDNTKWNENQNPRMFLAMITYITKNQPEWFRNILSIAPIMFSNKMARLGKGYMFESKRMKLRTQIPAEMLASIDLKYFNESTRKKIEKIRPLLIDGTASLSPGMMMGMFNMLSTVLGVSILNLGQKKYTKTTYWWDGLQSSDDFALIVNAPNHEGIQAGVDRFYRTCKLVGINMSKKKSYINRTGTFEFTSFFYRYGFVANFSMELPSFGVSGINESADMSIGVTVIKNNMINNDLGPATAQMALQLFIKDYRYTYRCHRGDTQIQTRRSFELKKLWEQTRSKAGLLVSDGGPNLYNIRNLHIPEVCLKWELMDEDYQGRLCNPLNPFVSHKEIESVNNAVVMPAHGPAKSMEYDAVATTHSWIPKRNRSILNTSQRGILEDEQMYQKCCNLFEKFFPSSSYRRPVGISSMVEAMVSRARIDARIDFESGRIKKEEFSEIMKICSTIEELRRQK.

The segment at 50 to 82 (SEKGKWTTNTETGAPQLNPIDGPLPEDNEPSGY) is disordered. Over residues 55–64 (WTTNTETGAP) the composition is skewed to polar residues. 2 short sequence motifs (nuclear localization signal) span residues 187 to 195 (RKRRVRDNM) and 203 to 216 (RTIG…NKRS). Residues 249 to 256 (RGFVYFVE) form a promoter-binding site region. The RdRp catalytic domain occupies 286 to 483 (VRKMMTNSQD…GINMSKKKSY (198 aa)).

Belongs to the influenza viruses polymerase PB1 family. In terms of assembly, influenza RNA polymerase is composed of three subunits: PB1, PB2 and PA. Interacts (via N-terminus) with PA (via C-terminus). Interacts (via C-terminus) with PB2 (via N-terminus); this interaction is essential for transcription initiation. Phosphorylated by host PRKCA.

It localises to the host nucleus. The protein resides in the host cytoplasm. The enzyme catalyses RNA(n) + a ribonucleoside 5'-triphosphate = RNA(n+1) + diphosphate. In terms of biological role, RNA-dependent RNA polymerase which is responsible for replication and transcription of virus RNA segments. The transcription of viral mRNAs occurs by a unique mechanism called cap-snatching. 5' methylated caps of cellular mRNAs are cleaved after 10-13 nucleotides by PA. In turn, these short capped RNAs are used as primers by PB1 for transcription of viral mRNAs. During virus replication, PB1 initiates RNA synthesis and copy vRNA into complementary RNA (cRNA) which in turn serves as a template for the production of more vRNAs. The chain is RNA-directed RNA polymerase catalytic subunit from Influenza A virus (strain A/Port Chalmers/1/1973 H3N2).